The chain runs to 407 residues: uncharacterized protein (407 aa).

2 coiled-coil regions span residues 96 to 130 (TDSI…FKNE) and 287 to 345 (MKCY…AKTS). A compositionally biased stretch (basic and acidic residues) spans 302-317 (EKRKDNLQKQNEEAAK). Residues 302 to 394 (EKRKDNLQKQ…NMDPAINESD (93 aa)) are disordered. The span at 318 to 331 (ITKRKNRQEKRREK) shows a compositional bias: basic residues. The span at 344–370 (TSVSSIPDTSSTTTSTNSTPTNTKSNS) shows a compositional bias: low complexity.

This is an uncharacterized protein from Acanthamoeba polyphaga (Amoeba).